A 552-amino-acid polypeptide reads, in one-letter code: Cycloheximide resistance protein (552 aa).

Positions 46–70 (VLNSSDKSQSSENKEQTEGDQATIQ) are disordered. A compositionally biased stretch (polar residues) spans 47–56 (LNSSDKSQSS). Transmembrane regions (helical) follow at residues 100–120 (AIAA…SAIY), 137–157 (LATL…LFWS), 168–188 (TPLY…TALS), 194–213 (LSVL…STGG), 225–246 (YSIA…GPLI), 262–282 (WSFW…SFSL), 346–362 (IYIA…FESV), 381–399 (YVST…LPTV), 419–439 (LPPA…FGWT), 445–464 (NWFV…FIIF), 477–494 (VEYL…RSVS), and 518–539 (WGSS…FFYL).

The protein belongs to the major facilitator superfamily. CAR1 family.

It is found in the membrane. In terms of biological role, probable transporter. Confers resistance to cycloheximide. This is Cycloheximide resistance protein (CYHR) from Candida maltosa (Yeast).